The primary structure comprises 314 residues: Polyamine aminopropyltransferase (314 aa).

The PABS domain occupies 13-249; it reads WSWFLEWLTP…SMWGFVVASD (237 aa). S-methyl-5'-thioadenosine is bound at residue Q42. Spermidine contacts are provided by H73 and E97. S-methyl-5'-thioadenosine is bound by residues D117 and 149–150; that span reads DA. The active-site Proton acceptor is D168. P177 contacts S-methyl-5'-thioadenosine.

This sequence belongs to the spermidine/spermine synthase family. Homodimer or homotetramer.

The protein resides in the cytoplasm. The enzyme catalyses S-adenosyl 3-(methylsulfanyl)propylamine + putrescine = S-methyl-5'-thioadenosine + spermidine + H(+). Its pathway is amine and polyamine biosynthesis; spermidine biosynthesis; spermidine from putrescine: step 1/1. Functionally, catalyzes the irreversible transfer of a propylamine group from the amino donor S-adenosylmethioninamine (decarboxy-AdoMet) to putrescine (1,4-diaminobutane) to yield spermidine. This chain is Polyamine aminopropyltransferase, found in Aeropyrum pernix (strain ATCC 700893 / DSM 11879 / JCM 9820 / NBRC 100138 / K1).